A 400-amino-acid polypeptide reads, in one-letter code: Imidazolonepropionase (400 aa).

Residues histidine 70 and histidine 72 each contribute to the Fe(3+) site. Zn(2+) is bound by residues histidine 70 and histidine 72. 3 residues coordinate 4-imidazolone-5-propanoate: arginine 79, tyrosine 142, and histidine 175. Tyrosine 142 lines the N-formimidoyl-L-glutamate pocket. Fe(3+) is bound at residue histidine 239. Histidine 239 contacts Zn(2+). Residue glutamine 242 coordinates 4-imidazolone-5-propanoate. Aspartate 314 provides a ligand contact to Fe(3+). Aspartate 314 contributes to the Zn(2+) binding site. Asparagine 316 and glycine 318 together coordinate N-formimidoyl-L-glutamate. 4-imidazolone-5-propanoate is bound at residue threonine 319.

It belongs to the metallo-dependent hydrolases superfamily. HutI family. Requires Zn(2+) as cofactor. The cofactor is Fe(3+).

The protein resides in the cytoplasm. The catalysed reaction is 4-imidazolone-5-propanoate + H2O = N-formimidoyl-L-glutamate. It functions in the pathway amino-acid degradation; L-histidine degradation into L-glutamate; N-formimidoyl-L-glutamate from L-histidine: step 3/3. Its function is as follows. Catalyzes the hydrolytic cleavage of the carbon-nitrogen bond in imidazolone-5-propanoate to yield N-formimidoyl-L-glutamate. It is the third step in the universal histidine degradation pathway. The chain is Imidazolonepropionase from Methylobacterium sp. (strain 4-46).